Consider the following 247-residue polypeptide: MAGHSKWANIKHRKAAQDAQRGKIFTKLIRELVTAAKIGGGDAGSNPRLRAAVDKALASNMTRDTINRAIDRGVGGGDDTNMETRIYEGYGPGGTAVMVECLSDNANRTISQVRPSFTKCGGNLGTEGSVGYLFNKKGLIIIDAGADEDALTEAAIEAGADDIQPQDDGSFEIYTAWEELGDVRDGIEKAGFKIAEAEVSMIPTTSVDLDAETAPKLLRLIEMLEDCDDVQNVYHNGEISDEVAALL.

This sequence belongs to the TACO1 family.

The protein resides in the cytoplasm. The sequence is that of Probable transcriptional regulatory protein MS0710 from Mannheimia succiniciproducens (strain KCTC 0769BP / MBEL55E).